A 417-amino-acid chain; its full sequence is Interferon-gamma-inducible GTPase 10 (417 aa).

Residue G2 is the site of N-myristoyl glycine attachment. Positions 67-249 (APLNIAVTGE…PSLESTLLEE (183 aa)) constitute an IRG-type G domain. G78, A79, S82, T83, S101, K183, D185, and S231 together coordinate GDP. The next 2 helical transmembrane spans lie at 284 to 302 (EALK…FFND) and 370 to 387 (AVTG…KSYY).

This sequence belongs to the TRAFAC class dynamin-like GTPase superfamily. GB1/RHD3 GTPase family. GB1 subfamily. As to quaternary structure, homooligomer; homooligomerization occurs upon GTP-binding and is required for the association with membranous structures. Homodimer; GDP-binding induces formation of an inactive head-to-head homodimer. In terms of processing, myristoylation is required for localization to pathogen-containing vacuoles. (Microbial infection) Phosphorylated by Toxoplasma gondii ROP18.

The protein resides in the membrane. It is found in the cytoplasmic vesicle membrane. The enzyme catalyses GTP + H2O = GDP + phosphate + H(+). In terms of biological role, interferon (IFN)-inducible GTPase that plays important roles in innate immunity against a diverse range of bacterial, viral and protozoan pathogens by mediating cytosolic release of pathogenic ligands that activate the inflammasomes. Following infection, recruited to the membrane of pathogens in a GBP-dependent manner and mediates disruption of the pathogen membrane, liberating ligands that are detected by inflammasomes, such as lipopolysaccharide (LPS) that activates the non-canonical CASP4/CASP11 inflammasome or double-stranded DNA (dsDNA) that activates the AIM2 inflammasome. Promotes AIM2 and NLRP3 inflammasome activation following A.fumigatus infection by liberating beta-glucan, which directly triggers inflammasome assembly. Promotes NLRP3 inflammasome activation following influenza A virus infection. The sequence is that of Interferon-gamma-inducible GTPase 10 from Mus musculus (Mouse).